Reading from the N-terminus, the 498-residue chain is ATP synthase subunit beta, chloroplastic (498 aa).

172 to 179 contacts ATP; it reads GGAGVGKT.

It belongs to the ATPase alpha/beta chains family. As to quaternary structure, F-type ATPases have 2 components, CF(1) - the catalytic core - and CF(0) - the membrane proton channel. CF(1) has five subunits: alpha(3), beta(3), gamma(1), delta(1), epsilon(1). CF(0) has four main subunits: a(1), b(1), b'(1) and c(9-12).

It localises to the plastid. The protein resides in the chloroplast thylakoid membrane. It catalyses the reaction ATP + H2O + 4 H(+)(in) = ADP + phosphate + 5 H(+)(out). In terms of biological role, produces ATP from ADP in the presence of a proton gradient across the membrane. The catalytic sites are hosted primarily by the beta subunits. This is ATP synthase subunit beta, chloroplastic from Phoenix dactylifera (Date palm).